Here is a 178-residue protein sequence, read N- to C-terminus: Bifunctional protein PyrR (178 aa).

Residues 42-43 (TR), arginine 83, 103-111 (DDVIYKGRT), arginine 136, and valine 160 contribute to the substrate site. Positions 99–111 (VVLVDDVIYKGRT) match the PRPP-binding motif.

Belongs to the purine/pyrimidine phosphoribosyltransferase family. PyrR subfamily.

The enzyme catalyses UMP + diphosphate = 5-phospho-alpha-D-ribose 1-diphosphate + uracil. Its function is as follows. Regulates the transcription of the pyrimidine nucleotide (pyr) operon in response to exogenous pyrimidines. In terms of biological role, also displays a weak uracil phosphoribosyltransferase activity which is not physiologically significant. The sequence is that of Bifunctional protein PyrR from Synechocystis sp. (strain ATCC 27184 / PCC 6803 / Kazusa).